Consider the following 183-residue polypeptide: Glutamyl-tRNA(Gln) amidotransferase subunit F, mitochondrial (183 aa).

It belongs to the GatF family. Subunit of the heterotrimeric GatFAB amidotransferase (AdT) complex, composed of A (HER2), B (PET112) and F (YGR102C) subunits.

The protein localises to the mitochondrion inner membrane. The catalysed reaction is L-glutamyl-tRNA(Gln) + L-glutamine + ATP + H2O = L-glutaminyl-tRNA(Gln) + L-glutamate + ADP + phosphate + H(+). Allows the formation of correctly charged Gln-tRNA(Gln) through the transamidation of misacylated Glu-tRNA(Gln) in the mitochondria. The reaction takes place in the presence of glutamine and ATP through an activated gamma-phospho-Glu-tRNA(Gln). Required for proper protein synthesis within the mitochondrion. The protein is Glutamyl-tRNA(Gln) amidotransferase subunit F, mitochondrial of Saccharomyces cerevisiae (strain ATCC 204508 / S288c) (Baker's yeast).